Reading from the N-terminus, the 95-residue chain is Acylphosphatase (95 aa).

Residues 10 to 95 (CIHVTVSGKV…VEDYSDFRVR (86 aa)) form the Acylphosphatase-like domain. Residues Arg25 and Asn43 contribute to the active site.

This sequence belongs to the acylphosphatase family.

It carries out the reaction an acyl phosphate + H2O = a carboxylate + phosphate + H(+). The polypeptide is Acylphosphatase (acyP) (Coxiella burnetii (strain RSA 493 / Nine Mile phase I)).